We begin with the raw amino-acid sequence, 257 residues long: UPF0246 protein PC1_3665 (257 aa).

The protein belongs to the UPF0246 family.

This is UPF0246 protein PC1_3665 from Pectobacterium carotovorum subsp. carotovorum (strain PC1).